Here is a 160-residue protein sequence, read N- to C-terminus: UPF0758 protein YfjY (160 aa).

Residues Ala38–Leu160 enclose the MPN domain. Residues His109, His111, and Asp122 each contribute to the Zn(2+) site. The JAMM motif signature appears at His109 to Asp122.

It belongs to the UPF0758 family.

This Escherichia coli (strain K12) protein is UPF0758 protein YfjY (yfjY).